The chain runs to 131 residues: Small ribosomal subunit protein uS8 (131 aa).

This sequence belongs to the universal ribosomal protein uS8 family. As to quaternary structure, part of the 30S ribosomal subunit. Contacts proteins S5 and S12.

In terms of biological role, one of the primary rRNA binding proteins, it binds directly to 16S rRNA central domain where it helps coordinate assembly of the platform of the 30S subunit. This Wolbachia pipientis wMel protein is Small ribosomal subunit protein uS8.